The chain runs to 345 residues: Phosphate acyltransferase (345 aa).

It belongs to the PlsX family. Homodimer. Probably interacts with PlsY.

The protein resides in the cytoplasm. The enzyme catalyses a fatty acyl-[ACP] + phosphate = an acyl phosphate + holo-[ACP]. Its pathway is lipid metabolism; phospholipid metabolism. Functionally, catalyzes the reversible formation of acyl-phosphate (acyl-PO(4)) from acyl-[acyl-carrier-protein] (acyl-ACP). This enzyme utilizes acyl-ACP as fatty acyl donor, but not acyl-CoA. This chain is Phosphate acyltransferase, found in Chromobacterium violaceum (strain ATCC 12472 / DSM 30191 / JCM 1249 / CCUG 213 / NBRC 12614 / NCIMB 9131 / NCTC 9757 / MK).